A 121-amino-acid chain; its full sequence is Large ribosomal subunit protein bL20 (121 aa).

Belongs to the bacterial ribosomal protein bL20 family.

Functionally, binds directly to 23S ribosomal RNA and is necessary for the in vitro assembly process of the 50S ribosomal subunit. It is not involved in the protein synthesizing functions of that subunit. This is Large ribosomal subunit protein bL20 from Mycoplasma mycoides subsp. mycoides SC (strain CCUG 32753 / NCTC 10114 / PG1).